The chain runs to 1652 residues: Maestro heat-like repeat-containing protein family member 1 (1652 aa).

7 HEAT repeats span residues Glu3–Ala41, Glu260–Arg300, Cys344–Ala382, Glu385–Leu423, Leu1369–Asp1407, Gln1410–Leu1448, and Gln1616–Ala1652.

This sequence belongs to the MROH1 family. Homooligomer; homooligomerizes at lysosome scission sites.

Its subcellular location is the lysosome membrane. In terms of biological role, lysosome fission factor. Recruited to lysosomes by RAB7 (RAB7A or RAB7B) at scission sites and homooligomerizes to mediate the constriction and scission of lysosomal tubules. May sever membranes by inserting amphipathic helices into one bilayer leaflet. Lysosome fission is required to maintain their steady-state number, shape, size, composition and function, and to accomplish regeneration. This Bos taurus (Bovine) protein is Maestro heat-like repeat-containing protein family member 1 (MROH1).